The following is a 422-amino-acid chain: Serine hydroxymethyltransferase (422 aa).

Residues Leu-119 and 123-125 (GHL) each bind (6S)-5,6,7,8-tetrahydrofolate. Lys-228 carries the post-translational modification N6-(pyridoxal phosphate)lysine. Residues Glu-244 and 352 to 354 (SPF) contribute to the (6S)-5,6,7,8-tetrahydrofolate site.

It belongs to the SHMT family. Homodimer. It depends on pyridoxal 5'-phosphate as a cofactor.

The protein resides in the cytoplasm. The enzyme catalyses (6R)-5,10-methylene-5,6,7,8-tetrahydrofolate + glycine + H2O = (6S)-5,6,7,8-tetrahydrofolate + L-serine. It functions in the pathway one-carbon metabolism; tetrahydrofolate interconversion. Its pathway is amino-acid biosynthesis; glycine biosynthesis; glycine from L-serine: step 1/1. Catalyzes the reversible interconversion of serine and glycine with tetrahydrofolate (THF) serving as the one-carbon carrier. This reaction serves as the major source of one-carbon groups required for the biosynthesis of purines, thymidylate, methionine, and other important biomolecules. Also exhibits THF-independent aldolase activity toward beta-hydroxyamino acids, producing glycine and aldehydes, via a retro-aldol mechanism. In Magnetococcus marinus (strain ATCC BAA-1437 / JCM 17883 / MC-1), this protein is Serine hydroxymethyltransferase.